Reading from the N-terminus, the 147-residue chain is UPF0260 protein PMI1174 (147 aa).

This sequence belongs to the UPF0260 family.

In Proteus mirabilis (strain HI4320), this protein is UPF0260 protein PMI1174.